A 113-amino-acid polypeptide reads, in one-letter code: Small ribosomal subunit protein bS6 (113 aa).

This sequence belongs to the bacterial ribosomal protein bS6 family.

In terms of biological role, binds together with bS18 to 16S ribosomal RNA. This chain is Small ribosomal subunit protein bS6 (rpsF), found in Buchnera aphidicola subsp. Acyrthosiphon pisum (strain APS) (Acyrthosiphon pisum symbiotic bacterium).